The primary structure comprises 117 residues: Large ribosomal subunit protein bL19 (117 aa).

This sequence belongs to the bacterial ribosomal protein bL19 family.

Functionally, this protein is located at the 30S-50S ribosomal subunit interface and may play a role in the structure and function of the aminoacyl-tRNA binding site. The chain is Large ribosomal subunit protein bL19 from Aliivibrio fischeri (strain ATCC 700601 / ES114) (Vibrio fischeri).